A 203-amino-acid polypeptide reads, in one-letter code: DNA-directed RNA polymerase III subunit rpc8 (203 aa).

The protein belongs to the eukaryotic RPB7/RPC8 RNA polymerase subunit family. Component of the RNA polymerase III (Pol III) complex consisting of 17 subunits. Rpc25/rpc8 and rpc17/rpc9 form a Pol III subcomplex.

The protein localises to the cytoplasm. It localises to the nucleus. Functionally, DNA-dependent RNA polymerase catalyzes the transcription of DNA into RNA using the four ribonucleoside triphosphates as substrates. Specific peripheric component of RNA polymerase III which synthesizes small RNAs, such as 5S rRNA and tRNA. The protein is DNA-directed RNA polymerase III subunit rpc8 (rpc25) of Schizosaccharomyces pombe (strain 972 / ATCC 24843) (Fission yeast).